Reading from the N-terminus, the 207-residue chain is LexA repressor (207 aa).

The segment at residues 28-48 (RAEIARHLGFKSANAAEEHLK) is a DNA-binding region (H-T-H motif). Active-site for autocatalytic cleavage activity residues include serine 124 and lysine 161.

The protein belongs to the peptidase S24 family. In terms of assembly, homodimer.

The catalysed reaction is Hydrolysis of Ala-|-Gly bond in repressor LexA.. Represses a number of genes involved in the response to DNA damage (SOS response), including recA and lexA. In the presence of single-stranded DNA, RecA interacts with LexA causing an autocatalytic cleavage which disrupts the DNA-binding part of LexA, leading to derepression of the SOS regulon and eventually DNA repair. The protein is LexA repressor of Pseudoalteromonas atlantica (strain T6c / ATCC BAA-1087).